The primary structure comprises 352 residues: Alanine racemase (352 aa).

K33 functions as the Proton acceptor; specific for D-alanine in the catalytic mechanism. K33 is modified (N6-(pyridoxal phosphate)lysine). R129 contacts substrate. Y250 serves as the catalytic Proton acceptor; specific for L-alanine. Residue M298 coordinates substrate.

The protein belongs to the alanine racemase family. Pyridoxal 5'-phosphate serves as cofactor.

It catalyses the reaction L-alanine = D-alanine. It functions in the pathway amino-acid biosynthesis; D-alanine biosynthesis; D-alanine from L-alanine: step 1/1. In terms of biological role, catalyzes the interconversion of L-alanine and D-alanine. May also act on other amino acids. The protein is Alanine racemase (alr) of Neisseria meningitidis serogroup C / serotype 2a (strain ATCC 700532 / DSM 15464 / FAM18).